We begin with the raw amino-acid sequence, 109 residues long: MFGKAGLGNLMKQAQQMQEKMAQVQEEIAEMEVTGESGAGLVKVTINGAHSCRRVEVDPSLLEDDKDMLEDLVAAAFNDAARRISEAQKDKMASVSNGMSLPPGFKMPF.

Belongs to the YbaB/EbfC family. As to quaternary structure, homodimer.

It localises to the cytoplasm. The protein resides in the nucleoid. Its function is as follows. Binds to DNA and alters its conformation. May be involved in regulation of gene expression, nucleoid organization and DNA protection. In Erwinia tasmaniensis (strain DSM 17950 / CFBP 7177 / CIP 109463 / NCPPB 4357 / Et1/99), this protein is Nucleoid-associated protein ETA_24730.